We begin with the raw amino-acid sequence, 272 residues long: 3-methyl-2-oxobutanoate hydroxymethyltransferase (272 aa).

2 residues coordinate Mg(2+): aspartate 43 and aspartate 82. 3-methyl-2-oxobutanoate is bound by residues 43 to 44, aspartate 82, and lysine 112; that span reads DS. Glutamate 114 lines the Mg(2+) pocket. Residue glutamate 179 is the Proton acceptor of the active site.

This sequence belongs to the PanB family. As to quaternary structure, homodecamer; pentamer of dimers. The cofactor is Mg(2+).

It is found in the cytoplasm. It catalyses the reaction 3-methyl-2-oxobutanoate + (6R)-5,10-methylene-5,6,7,8-tetrahydrofolate + H2O = 2-dehydropantoate + (6S)-5,6,7,8-tetrahydrofolate. It functions in the pathway cofactor biosynthesis; (R)-pantothenate biosynthesis; (R)-pantoate from 3-methyl-2-oxobutanoate: step 1/2. In terms of biological role, catalyzes the reversible reaction in which hydroxymethyl group from 5,10-methylenetetrahydrofolate is transferred onto alpha-ketoisovalerate to form ketopantoate. This is 3-methyl-2-oxobutanoate hydroxymethyltransferase from Staphylococcus epidermidis (strain ATCC 35984 / DSM 28319 / BCRC 17069 / CCUG 31568 / BM 3577 / RP62A).